The sequence spans 329 residues: Malate dehydrogenase (329 aa).

Residue 12 to 18 (GAAGQIG) participates in NAD(+) binding. Arg-95 and Arg-101 together coordinate substrate. NAD(+) is bound by residues Asn-108, Gln-115, and 132-134 (VGN). Substrate contacts are provided by Asn-134 and Arg-165. His-190 functions as the Proton acceptor in the catalytic mechanism.

This sequence belongs to the LDH/MDH superfamily. MDH type 2 family.

It carries out the reaction (S)-malate + NAD(+) = oxaloacetate + NADH + H(+). In terms of biological role, catalyzes the reversible oxidation of malate to oxaloacetate. The polypeptide is Malate dehydrogenase (Polynucleobacter asymbioticus (strain DSM 18221 / CIP 109841 / QLW-P1DMWA-1) (Polynucleobacter necessarius subsp. asymbioticus)).